The following is a 480-amino-acid chain: 3-isopropylmalate dehydratase large subunit (480 aa).

[4Fe-4S] cluster is bound by residues Cys360, Cys418, and Cys421.

Belongs to the aconitase/IPM isomerase family. LeuC type 1 subfamily. As to quaternary structure, heterodimer of LeuC and LeuD. Requires [4Fe-4S] cluster as cofactor.

It carries out the reaction (2R,3S)-3-isopropylmalate = (2S)-2-isopropylmalate. It functions in the pathway amino-acid biosynthesis; L-leucine biosynthesis; L-leucine from 3-methyl-2-oxobutanoate: step 2/4. In terms of biological role, catalyzes the isomerization between 2-isopropylmalate and 3-isopropylmalate, via the formation of 2-isopropylmaleate. This chain is 3-isopropylmalate dehydratase large subunit, found in Anaeromyxobacter dehalogenans (strain 2CP-1 / ATCC BAA-258).